We begin with the raw amino-acid sequence, 198 residues long: Glycerol-3-phosphate acyltransferase (198 aa).

Transmembrane regions (helical) follow at residues 5–25, 56–76, 84–104, 114–134, and 158–178; these read LILL…LWIG, SIVT…PFFF, FWLL…FAGF, AGVI…VFLV, and LFMG…FVIW.

The protein belongs to the PlsY family. In terms of assembly, probably interacts with PlsX.

The protein localises to the cell membrane. The catalysed reaction is an acyl phosphate + sn-glycerol 3-phosphate = a 1-acyl-sn-glycero-3-phosphate + phosphate. It functions in the pathway lipid metabolism; phospholipid metabolism. Functionally, catalyzes the transfer of an acyl group from acyl-phosphate (acyl-PO(4)) to glycerol-3-phosphate (G3P) to form lysophosphatidic acid (LPA). This enzyme utilizes acyl-phosphate as fatty acyl donor, but not acyl-CoA or acyl-ACP. In Listeria monocytogenes serotype 4b (strain CLIP80459), this protein is Glycerol-3-phosphate acyltransferase.